The following is a 160-amino-acid chain: Serine-protein kinase RsbW (160 aa).

The protein belongs to the anti-sigma-factor family.

The enzyme catalyses L-seryl-[protein] + ATP = O-phospho-L-seryl-[protein] + ADP + H(+). It carries out the reaction L-threonyl-[protein] + ATP = O-phospho-L-threonyl-[protein] + ADP + H(+). Functionally, negative regulator of sigma-B activity. Phosphorylates and inactivates its specific antagonist protein, RsbV. Upon phosphorylation of RsbV, RsbW is released and binds to sigma-B, thereby blocking its ability to form an RNA polymerase holoenzyme (E-sigma-B). The chain is Serine-protein kinase RsbW from Bacillus cereus (strain ZK / E33L).